We begin with the raw amino-acid sequence, 31 residues long: Protamine-1B (31 aa).

The interval 1–31 (MPRRRRASRRIRRRRRPRVSRRRRRGGRRRR) is disordered.

In terms of tissue distribution, testis.

The protein localises to the nucleus. It localises to the chromosome. Protamines substitute for histones in the chromatin of sperm during the haploid phase of spermatogenesis. They compact sperm DNA into a highly condensed, stable and inactive complex. This chain is Protamine-1B, found in Oncorhynchus mykiss (Rainbow trout).